Consider the following 315-residue polypeptide: Ribosomal protein L11 methyltransferase (315 aa).

S-adenosyl-L-methionine contacts are provided by T163, G185, D207, and N249.

It belongs to the methyltransferase superfamily. PrmA family.

The protein localises to the cytoplasm. The catalysed reaction is L-lysyl-[protein] + 3 S-adenosyl-L-methionine = N(6),N(6),N(6)-trimethyl-L-lysyl-[protein] + 3 S-adenosyl-L-homocysteine + 3 H(+). Its function is as follows. Methylates ribosomal protein L11. The protein is Ribosomal protein L11 methyltransferase of Lactobacillus helveticus (strain DPC 4571).